The primary structure comprises 237 residues: 2,3-bisphosphoglycerate-dependent phosphoglycerate mutase (237 aa).

Substrate is bound by residues 10-17 (RHGESKWN), 23-24 (TG), arginine 62, 89-92 (ERHY), lysine 100, 116-117 (RR), and 185-186 (GN). Histidine 11 acts as the Tele-phosphohistidine intermediate in catalysis. The active-site Proton donor/acceptor is glutamate 89.

It belongs to the phosphoglycerate mutase family. BPG-dependent PGAM subfamily. In terms of assembly, homodimer.

It carries out the reaction (2R)-2-phosphoglycerate = (2R)-3-phosphoglycerate. It functions in the pathway carbohydrate degradation; glycolysis; pyruvate from D-glyceraldehyde 3-phosphate: step 3/5. Its function is as follows. Catalyzes the interconversion of 2-phosphoglycerate and 3-phosphoglycerate. In Baumannia cicadellinicola subsp. Homalodisca coagulata, this protein is 2,3-bisphosphoglycerate-dependent phosphoglycerate mutase.